The chain runs to 359 residues: Cytosolic sulfotransferase 15 (359 aa).

Position 101–106 (101–106 (KSGTTW)) interacts with 3'-phosphoadenylyl sulfate. Histidine 168 acts as the Proton acceptor in catalysis. Residues arginine 190, serine 198, tyrosine 256, and 322 to 324 (RKG) each bind 3'-phosphoadenylyl sulfate.

This sequence belongs to the sulfotransferase 1 family. Expressed in leaves.

The protein resides in the cytoplasm. It carries out the reaction a 12-hydroxyjasmonate + 3'-phosphoadenylyl sulfate = a 12-sulfojasmonate + adenosine 3',5'-bisphosphate + H(+). Its function is as follows. Sulfotransferase that utilizes 3'-phospho-5'-adenylyl sulfate (PAPS) as sulfonate donor to specifically catalyze the sulfate conjugation of hydroxyjasmonates, with a preference for 12-hydroxyjasmonate over 11-hydroxyjasmonate. No activity with 12-hydroxyjasmonic acid methyl ester, cucurbic acid, 7-iso-cucurbic acid, 6-epi-cucurbic acid, 6-epi-7-iso-cucurbic acid and their methyl esters, prostaglandin E2, arachidonyl alcohol and 11-eicosenol. This chain is Cytosolic sulfotransferase 15 (SOT15), found in Arabidopsis thaliana (Mouse-ear cress).